The following is a 327-amino-acid chain: Zinc transport protein ZntB (327 aa).

Topologically, residues 1-273 are cytoplasmic; it reads MEGIKGSEVN…SRRTYTMSLM (273 aa). A helical membrane pass occupies residues 274-294; that stretch reads AMVFLPSTFLTGLFGVNLGGI. Residues 295–300 are Periplasmic-facing; the sequence is PGGGYQ. A helical transmembrane segment spans residues 301–321; that stretch reads FGFSAFCIMLVVLIGGVAWWL. Over 322–327 the chain is Cytoplasmic; that stretch reads HRSKWL.

This sequence belongs to the CorA metal ion transporter (MIT) (TC 1.A.35) family.

The protein localises to the cell inner membrane. It catalyses the reaction Zn(2+)(out) + H(+)(out) = Zn(2+)(in) + H(+)(in). Zinc transporter. Acts as a Zn(2+):proton symporter, which likely mediates zinc ion uptake. The polypeptide is Zinc transport protein ZntB (Enterobacter sp. (strain 638)).